The primary structure comprises 753 residues: 5-methyltetrahydropteroyltriglutamate--homocysteine methyltransferase (753 aa).

5-methyltetrahydropteroyltri-L-glutamate-binding positions include 17 to 20 and lysine 117; that span reads RELK. L-homocysteine-binding positions include 431–433 and glutamate 484; that span reads IGS. Residues 431–433 and glutamate 484 contribute to the L-methionine site; that span reads IGS. 5-methyltetrahydropteroyltri-L-glutamate-binding positions include 515–516 and tryptophan 561; that span reads RC. Aspartate 599 lines the L-homocysteine pocket. An L-methionine-binding site is contributed by aspartate 599. Residue glutamate 605 coordinates 5-methyltetrahydropteroyltri-L-glutamate. Histidine 641, cysteine 643, and glutamate 665 together coordinate Zn(2+). Residue histidine 694 is the Proton donor of the active site. Cysteine 726 contributes to the Zn(2+) binding site.

Belongs to the vitamin-B12 independent methionine synthase family. Zn(2+) is required as a cofactor.

The enzyme catalyses 5-methyltetrahydropteroyltri-L-glutamate + L-homocysteine = tetrahydropteroyltri-L-glutamate + L-methionine. It functions in the pathway amino-acid biosynthesis; L-methionine biosynthesis via de novo pathway; L-methionine from L-homocysteine (MetE route): step 1/1. Catalyzes the transfer of a methyl group from 5-methyltetrahydrofolate to homocysteine resulting in methionine formation. The protein is 5-methyltetrahydropteroyltriglutamate--homocysteine methyltransferase of Escherichia coli O139:H28 (strain E24377A / ETEC).